The chain runs to 122 residues: Large ribosomal subunit protein uL29B (122 aa).

A coiled-coil region spans residues 10-69 (QLGIKQIEERAAEIKAELAALRQKKNSGDVGANDIKTAKKNLARALTVRREKILEELVEA).

The protein belongs to the universal ribosomal protein uL29 family. In terms of assembly, component of the large ribosomal subunit.

The protein localises to the cytoplasm. The polypeptide is Large ribosomal subunit protein uL29B (RPL35C) (Encephalitozoon cuniculi (strain GB-M1) (Microsporidian parasite)).